Reading from the N-terminus, the 31-residue chain is Photosystem II reaction center protein T (31 aa).

A helical transmembrane segment spans residues 3–23; that stretch reads SAAYILVLALALGVIFFAIAF.

The protein belongs to the PsbT family. In terms of assembly, PSII is composed of 1 copy each of membrane proteins PsbA, PsbB, PsbC, PsbD, PsbE, PsbF, PsbH, PsbI, PsbJ, PsbK, PsbL, PsbM, PsbT, PsbX, PsbY, PsbZ, Psb30/Ycf12, peripheral proteins PsbO, CyanoQ (PsbQ), PsbU, PsbV and a large number of cofactors. It forms dimeric complexes.

The protein localises to the cellular thylakoid membrane. Functionally, found at the monomer-monomer interface of the photosystem II (PS II) dimer, plays a role in assembly and dimerization of PSII. PSII is a light-driven water plastoquinone oxidoreductase, using light energy to abstract electrons from H(2)O, generating a proton gradient subsequently used for ATP formation. This chain is Photosystem II reaction center protein T, found in Trichodesmium erythraeum (strain IMS101).